Consider the following 221-residue polypeptide: Protein LURP-one-related 17 (221 aa).

The interval 1–20 (MFPFLKQRSRSVHGEDAPSS) is disordered.

This sequence belongs to the LOR family.

In terms of biological role, might be related to the phospholipid scramblase and tubby-like superfamily of membrane tethered transcription factors. The sequence is that of Protein LURP-one-related 17 from Arabidopsis thaliana (Mouse-ear cress).